Reading from the N-terminus, the 338-residue chain is Glyceraldehyde-3-phosphate dehydrogenase (338 aa).

Residues 13–14 (RI), aspartate 35, and arginine 80 contribute to the NAD(+) site. D-glyceraldehyde 3-phosphate-binding positions include 151–153 (SCT), threonine 182, 211–212 (TG), and arginine 234. Catalysis depends on cysteine 152, which acts as the Nucleophile. Asparagine 316 provides a ligand contact to NAD(+).

It belongs to the glyceraldehyde-3-phosphate dehydrogenase family. In terms of assembly, homotetramer.

The protein localises to the cytoplasm. The enzyme catalyses D-glyceraldehyde 3-phosphate + phosphate + NAD(+) = (2R)-3-phospho-glyceroyl phosphate + NADH + H(+). Its pathway is carbohydrate degradation; glycolysis; pyruvate from D-glyceraldehyde 3-phosphate: step 1/5. The protein is Glyceraldehyde-3-phosphate dehydrogenase (GPDA) of Colletotrichum gloeosporioides (Anthracnose fungus).